The primary structure comprises 480 residues: Aromatic-L-amino-acid decarboxylase (480 aa).

Residue Met1 is modified to N-acetylmethionine. Tandem repeats lie at residues 58 to 115 (KDIE…TELE) and 118 to 178 (MMDW…TQAA). The segment at 58–178 (KDIEKIIMPG…AASPEFTQAA (121 aa)) is 2 X approximate tandem repeats. Residue Thr82 participates in substrate binding. Positions 148 and 149 each coordinate pyridoxal 5'-phosphate. His192 contacts substrate. Pyridoxal 5'-phosphate-binding residues include Thr246 and Asn300. Lys303 bears the N6-(pyridoxal phosphate)lysine mark.

The protein belongs to the group II decarboxylase family. As to quaternary structure, homodimer. It depends on pyridoxal 5'-phosphate as a cofactor.

It carries out the reaction L-dopa + H(+) = dopamine + CO2. It catalyses the reaction 5-hydroxy-L-tryptophan + H(+) = serotonin + CO2. It functions in the pathway catecholamine biosynthesis; dopamine biosynthesis; dopamine from L-tyrosine: step 2/2. In terms of biological role, catalyzes the decarboxylation of L-3,4-dihydroxyphenylalanine (DOPA) to dopamine and L-5-hydroxytryptophan to serotonin. The sequence is that of Aromatic-L-amino-acid decarboxylase (Ddc) from Mus musculus (Mouse).